The chain runs to 91 residues: Heat shock protein 30E (91 aa).

The segment at 62–91 (RDQIRQPGAPESEGTSPNTGKDGKDPGNSL) is disordered. A compositionally biased stretch (basic and acidic residues) spans 82–91 (KDGKDPGNSL).

The protein belongs to the small heat shock protein (HSP20) family.

In Xenopus laevis (African clawed frog), this protein is Heat shock protein 30E (hsp30e).